A 178-amino-acid chain; its full sequence is Glutamyl-tRNA(Gln) amidotransferase subunit C, mitochondrial (178 aa).

The transit peptide at 1–31 directs the protein to the mitochondrion; that stretch reads MFRHIFTLGPRSISAITVRSRRALSSTAKPV. The segment at 26-67 is disordered; that stretch reads STAKPVSAPVTSDDRPNLDVKHLKHPTKVPQQPHKSDIDRRQ. Residues 37 to 46 are compositionally biased toward basic and acidic residues; it reads SDDRPNLDVK.

This sequence belongs to the GatC family. As to quaternary structure, subunit of the heterotrimeric GatCAB amidotransferase (AdT) complex, composed of A, B and C subunits.

It is found in the mitochondrion. The enzyme catalyses L-glutamyl-tRNA(Gln) + L-glutamine + ATP + H2O = L-glutaminyl-tRNA(Gln) + L-glutamate + ADP + phosphate + H(+). In terms of biological role, allows the formation of correctly charged Gln-tRNA(Gln) through the transamidation of misacylated Glu-tRNA(Gln) in the mitochondria. The reaction takes place in the presence of glutamine and ATP through an activated gamma-phospho-Glu-tRNA(Gln). In Aedes aegypti (Yellowfever mosquito), this protein is Glutamyl-tRNA(Gln) amidotransferase subunit C, mitochondrial.